Here is a 604-residue protein sequence, read N- to C-terminus: Glutamine--fructose-6-phosphate aminotransferase [isomerizing] (604 aa).

The active-site Nucleophile; for GATase activity is C2. In terms of domain architecture, Glutamine amidotransferase type-2 spans 2 to 219 (CGIMGAVSER…EGDSACVTTQ (218 aa)). 2 SIS domains span residues 279–427 (LRAS…DNRA) and 454–594 (LASL…VDQP). The active-site For Fru-6P isomerization activity is K599.

As to quaternary structure, homodimer.

It is found in the cytoplasm. The catalysed reaction is D-fructose 6-phosphate + L-glutamine = D-glucosamine 6-phosphate + L-glutamate. Its function is as follows. Catalyzes the first step in hexosamine metabolism, converting fructose-6P into glucosamine-6P using glutamine as a nitrogen source. This chain is Glutamine--fructose-6-phosphate aminotransferase [isomerizing], found in Legionella pneumophila subsp. pneumophila (strain Philadelphia 1 / ATCC 33152 / DSM 7513).